The sequence spans 119 residues: Large ribosomal subunit protein bL20 (119 aa).

It belongs to the bacterial ribosomal protein bL20 family.

In terms of biological role, binds directly to 23S ribosomal RNA and is necessary for the in vitro assembly process of the 50S ribosomal subunit. It is not involved in the protein synthesizing functions of that subunit. In Afipia carboxidovorans (strain ATCC 49405 / DSM 1227 / KCTC 32145 / OM5) (Oligotropha carboxidovorans), this protein is Large ribosomal subunit protein bL20.